A 286-amino-acid chain; its full sequence is MVCPHNNPKQGNTREMEDSIHTDFNNDMSYGDYLCLEQVLSAQHPQSEVHDEMLFIIIHQTSELWLKLAGNELDTMIHNVQQGDFSHAFKVISRVKQILNQLTQSWNILSTLTPVDYLKFRDALGRSSGFQSYGYRKIEFLLGNKNADLIQVHESNEQVHSELQGILERPSLYDEVIRVLHKQGLPIDDSALNRDFTQPYQANESVLNAWLSVYRNADEHFELYELAEKLIDIEDAFQQWRFKHMYAVQRIIGNKMGTGGSSGVSFLKKALDISFFPELFELRTHL.

Residues 55 to 59 (FIIIH), tyrosine 117, and arginine 121 contribute to the substrate site. Heme is bound at residue histidine 244. Threonine 258 lines the substrate pocket.

It belongs to the tryptophan 2,3-dioxygenase family. Homotetramer. Requires heme as cofactor.

It catalyses the reaction L-tryptophan + O2 = N-formyl-L-kynurenine. It participates in amino-acid degradation; L-tryptophan degradation via kynurenine pathway; L-kynurenine from L-tryptophan: step 1/2. Heme-dependent dioxygenase that catalyzes the oxidative cleavage of the L-tryptophan (L-Trp) pyrrole ring and converts L-tryptophan to N-formyl-L-kynurenine. Catalyzes the oxidative cleavage of the indole moiety. This is Tryptophan 2,3-dioxygenase from Shewanella woodyi (strain ATCC 51908 / MS32).